Consider the following 204-residue polypeptide: FMN-dependent NADH:quinone oxidoreductase (204 aa).

S9 provides a ligand contact to FMN.

It belongs to the azoreductase type 1 family. In terms of assembly, homodimer. It depends on FMN as a cofactor.

It catalyses the reaction 2 a quinone + NADH + H(+) = 2 a 1,4-benzosemiquinone + NAD(+). The enzyme catalyses N,N-dimethyl-1,4-phenylenediamine + anthranilate + 2 NAD(+) = 2-(4-dimethylaminophenyl)diazenylbenzoate + 2 NADH + 2 H(+). In terms of biological role, quinone reductase that provides resistance to thiol-specific stress caused by electrophilic quinones. Its function is as follows. Also exhibits azoreductase activity. Catalyzes the reductive cleavage of the azo bond in aromatic azo compounds to the corresponding amines. In Thiobacillus denitrificans (strain ATCC 25259 / T1), this protein is FMN-dependent NADH:quinone oxidoreductase.